A 354-amino-acid polypeptide reads, in one-letter code: MGEQPIFTTRAHVFQIDPNTKKNWMPASKQAVTVSYFYDVTRNSYRIISVDGAKVIINSTITPNMTFTKTSQKFGQWADSRANTVFGLGFSSEQQLTKFAEKFQEVKEAAKIAKDKTQEKIETSSNHSQESGRETPSSTQASSVNGTDDEKASHAGPANTHLKSENDKLKIALTQSAANVKKWEIELQTLRESNARLTTALQESAASVEQWKRQFSICRDENDRLRNKIDELEEQCSEINREKEKNTQLKRRIEELEAELREKETELKDLRKQSEIIPQLMSECEYVSEKLEAAERDNQNLEDKVRSLKTDIEESKYRQRHLKVELKSFLEVLDGKIDDLHDFRRGLSKLGTDN.

Residues 1-110 (MGEQPIFTTR…EKFQEVKEAA (110 aa)) enclose the WH1 domain. Positions 92 to 122 (SEQQLTKFAEKFQEVKEAAKIAKDKTQEKIE) form a coiled coil. Positions 112-122 (IAKDKTQEKIE) are enriched in basic and acidic residues. The tract at residues 112–166 (IAKDKTQEKIETSSNHSQESGRETPSSTQASSVNGTDDEKASHAGPANTHLKSEN) is disordered. A compositionally biased stretch (polar residues) spans 123-146 (TSSNHSQESGRETPSSTQASSVNG). Residues 160–329 (THLKSENDKL…RHLKVELKSF (170 aa)) adopt a coiled-coil conformation.

The protein belongs to the Homer family. In terms of assembly, forms coiled-coil structures that mediate homo- and heteromultimerization. Interacts with NFATC2; interaction is reduced by AKT activation. Interacts with NFATC1 and NFATC4. Interacts with DAGLA (via PPXXF motif); this interaction is required for the cell membrane localization of DAGLA.

It is found in the cytoplasm. It localises to the cell membrane. The protein localises to the postsynaptic density. Its subcellular location is the synapse. The protein resides in the cell projection. It is found in the stereocilium. In terms of biological role, postsynaptic density scaffolding protein. Binds and cross-links cytoplasmic regions of GRM1, GRM5, ITPR1, DNM3, RYR1, RYR2, SHANK1 and SHANK3. By physically linking GRM1 and GRM5 with ER-associated ITPR1 receptors, it aids the coupling of surface receptors to intracellular calcium release. May also couple GRM1 to PI3 kinase through its interaction with AGAP2. Isoforms can be differently regulated and may play an important role in maintaining the plasticity at glutamatergic synapses. Required for normal hearing. Negatively regulates T cell activation by inhibiting the calcineurin-NFAT pathway. Acts by competing with calcineurin/PPP3CA for NFAT protein binding, hence preventing NFAT activation by PPP3CA. This is Homer protein homolog 2 from Homo sapiens (Human).